The sequence spans 336 residues: Phosphate acyltransferase (336 aa).

It belongs to the PlsX family. Homodimer. Probably interacts with PlsY.

It localises to the cytoplasm. It catalyses the reaction a fatty acyl-[ACP] + phosphate = an acyl phosphate + holo-[ACP]. The protein operates within lipid metabolism; phospholipid metabolism. Its function is as follows. Catalyzes the reversible formation of acyl-phosphate (acyl-PO(4)) from acyl-[acyl-carrier-protein] (acyl-ACP). This enzyme utilizes acyl-ACP as fatty acyl donor, but not acyl-CoA. The protein is Phosphate acyltransferase of Pseudomonas fluorescens (strain Pf0-1).